Here is a 233-residue protein sequence, read N- to C-terminus: Movement and silencing protein TGBp1 (233 aa).

The (+)RNA virus helicase ATP-binding domain occupies 1–133 (MNHFINLLVA…CKLLSSLGIK (133 aa)). The region spanning 134–233 (VESHRRDRDV…EFPHTTSRPQ (100 aa)) is the (+)RNA virus helicase C-terminal domain.

Belongs to the Tymovirales TGBp1 protein family. In terms of assembly, homodimer and homooligomer. Interacts with capsid protein. Interacts with host AGO1; this interaction targets the host protein for degradation, thereby suppressing the antiviral RNA silencing.

Its subcellular location is the host cytoplasm. In terms of biological role, transports viral genome to neighboring plant cells directly through plasmosdesmata, without any budding. The movement protein allows efficient cell to cell propagation, by bypassing the host cell wall barrier. Increases plasmodesma size exclusion limit. Acts as a suppressor of RNA-mediated gene silencing, also known as post-transcriptional gene silencing (PTGS), a mechanism of plant viral defense that limits the accumulation of viral RNAs. The protein is Movement and silencing protein TGBp1 of Carica papaya (Papaya).